Here is a 77-residue protein sequence, read N- to C-terminus: uncharacterized protein (77 aa).

This is an uncharacterized protein from Homo sapiens (Human).